The following is a 1010-amino-acid chain: Retinoblastoma-related protein 1 (1010 aa).

The segment at 1 to 23 (MEGAAPPASSGSEVTGAGSGKVD) is disordered. Positions 419-619 (TPVSTAMTTA…EKGSSMYNSL (201 aa)) are domain A. The tract at residues 419-861 (TPVSTAMTTA…NEVFIPTVKP (443 aa)) is pocket. The segment at 620 to 730 (IVARPTLSAE…PAAGGELCAE (111 aa)) is spacer. Residues 657–679 (LPPLPFQKQEHSPDKDEVRSPKR) are disordered. Basic and acidic residues predominate over residues 664–679 (KQEHSPDKDEVRSPKR). Residues 731–861 (TGIGVFLSKI…NEVFIPTVKP (131 aa)) form a domain B region. The disordered stretch occupies residues 868-898 (SGTSPNKKNEEKCAADGPYPESPRLSRFPNL).

Belongs to the retinoblastoma protein (RB) family.

Its subcellular location is the nucleus. Regulator of biological processes that recruits a histone deacetylase to control gene transcription. May play a role in the entry into mitosis, negatively regulating the cell proliferation. Formation of stable complexes with geminiviridae replication-associated proteins may create a cellular environment which favors viral DNA replication. The sequence is that of Retinoblastoma-related protein 1 (RBR1) from Oryza sativa subsp. indica (Rice).